The primary structure comprises 65 residues: Large ribosomal subunit protein bL35 (65 aa).

A disordered region spans residues 1–26 (MPKMKSNKGASKRFKKTASGGFKCKQ).

It belongs to the bacterial ribosomal protein bL35 family.

This chain is Large ribosomal subunit protein bL35, found in Idiomarina loihiensis (strain ATCC BAA-735 / DSM 15497 / L2-TR).